The chain runs to 547 residues: Chaperonin GroEL (547 aa).

Residues 30 to 33 (TLGP), lysine 51, 87 to 91 (DGTTT), glycine 415, 479 to 481 (NAA), and aspartate 495 each bind ATP. Residues 524 to 547 (APKKDEPTPPAAGGGMGGMGGMDF) are disordered. Over residues 535 to 547 (AGGGMGGMGGMDF) the composition is skewed to gly residues.

This sequence belongs to the chaperonin (HSP60) family. Forms a cylinder of 14 subunits composed of two heptameric rings stacked back-to-back. Interacts with the co-chaperonin GroES.

It is found in the cytoplasm. The catalysed reaction is ATP + H2O + a folded polypeptide = ADP + phosphate + an unfolded polypeptide.. Its function is as follows. Together with its co-chaperonin GroES, plays an essential role in assisting protein folding. The GroEL-GroES system forms a nano-cage that allows encapsulation of the non-native substrate proteins and provides a physical environment optimized to promote and accelerate protein folding. This is Chaperonin GroEL from Xylella fastidiosa (strain M23).